The chain runs to 245 residues: DNA repair protein RecO (245 aa).

The protein belongs to the RecO family.

Its function is as follows. Involved in DNA repair and RecF pathway recombination. In Klebsiella pneumoniae (strain 342), this protein is DNA repair protein RecO.